The chain runs to 136 residues: uncharacterized protein (136 aa).

The N-terminal stretch at 1 to 35 is a signal peptide; that stretch reads MTHRAVPCQPRAFSKIKVLVISFLFLMVAFLPFSS.

This is an uncharacterized protein from Saccharomyces cerevisiae (strain ATCC 204508 / S288c) (Baker's yeast).